The primary structure comprises 153 residues: Holo-[acyl-carrier-protein] synthase (153 aa).

Asp24 and Glu78 together coordinate Mg(2+).

It belongs to the P-Pant transferase superfamily. AcpS family. The cofactor is Mg(2+).

The protein resides in the cytoplasm. The catalysed reaction is apo-[ACP] + CoA = holo-[ACP] + adenosine 3',5'-bisphosphate + H(+). Transfers the 4'-phosphopantetheine moiety from coenzyme A to a Ser of acyl-carrier-protein. This chain is Holo-[acyl-carrier-protein] synthase, found in Bordetella pertussis (strain Tohama I / ATCC BAA-589 / NCTC 13251).